Consider the following 190-residue polypeptide: Dynein axonemal light chain 1 (190 aa).

An N-acetylalanine modification is found at Ala2. LRR repeat units lie at residues 47 to 69 (LANCEKLSLSTNCIEKIANLNGL), 70 to 93 (KNLRILSLGRNNIKNLNGLEAVGD), 95 to 114 (LEELWISYNFIEKLKGIHVM), and 115 to 138 (RKLKILYISNNLVKDWAEFVKLAE). Ser56 is subject to Phosphoserine.

This sequence belongs to the dynein light chain LC1-type family. As to quaternary structure, interacts with ZMYND10 (via C-terminus). Interacts with DNAH5, a outer arm dynein heavy chain. Interacts with tubulin located within the A-tubule of the outer doublets in a ATP-independent manner.

It is found in the cytoplasm. Its subcellular location is the cytoskeleton. The protein resides in the cilium axoneme. Its function is as follows. Part of the multisubunit axonemal ATPase complexes that generate the force for cilia motility and govern beat frequency. Component of the outer arm dynein (ODA). May be involved in a mechanosensory feedback mechanism controlling ODA activity based on external conformational cues by tethering the outer arm dynein heavy chain (DNAH5) to the microtubule within the axoneme. Important for ciliary function in the airways and for the function of the cilia that produce the nodal flow essential for the determination of the left-right asymmetry. The polypeptide is Dynein axonemal light chain 1 (Rattus norvegicus (Rat)).